The sequence spans 617 residues: Hemagglutinin glycoprotein (617 aa).

Residues Met1 to Val37 lie on the Intravirion side of the membrane. The interval Met1–Cys154 is stalk. Residues Leu38–Ile58 form a helical; Signal-anchor for type II membrane protein membrane-spanning segment. The Virion surface segment spans residues Arg59–Arg617. N-linked (GlcNAc...) asparagine; by host glycans are attached at residues Asn168, Asn187, Asn200, Asn215, and Asn238. 5 disulfide bridges follow: Cys188–Cys606, Cys287–Cys300, Cys381–Cys494, Cys386–Cys394, and Cys570–Cys579. The interaction with host NECTIN4 receptor stretch occupies residues Pro458–Tyr543.

It belongs to the paramyxoviruses hemagglutinin-neuraminidase family. Non-sialidase subfamily. As to quaternary structure, homodimer; disulfide-linked. Further forms homotetramer (dimer of dimers). Interacts (via C-terminus) with human NECTIN4 (via N-terminus); this interaction allows attachment to the respiratory epithelium and viral entry. Interacts (via C-terminus) with human SLAMF1/CD150 (via N-terminus); this interaction allows attachment and viral entry into the CD150-expressing immune cells. Interacts with human CD46 antigen (via N-terminus); this interaction allows attachment and viral entry of vaccine and laboratory-adapted strains.

Its subcellular location is the virion membrane. It is found in the host cell membrane. Attaches the virus to the human SLAMF1/CD150 receptor for entry into host dendritic cells, macrophages, activated memory T cells and naive or memory B cells, thereby explaining the long immunosuppression that follows infection. In the respiratory airways, binds to the NECTIN4 receptor for entry into the host cell. Binding of H protein to the receptor induces a conformational change that allows the F protein to trigger virion/cell membranes fusion. The vaccine and laboratory-adapted strains use host CD46 as an alternate receptor. The high degree of interaction between H and CD46 results in down-regulation of the latter from the surface of infected cells, rendering them more sensitive to c3b-mediated complement lysis. This Measles virus (strain Edmonston) (MeV) protein is Hemagglutinin glycoprotein (H).